The primary structure comprises 315 residues: Prephenate dehydratase (315 aa).

The 187-residue stretch at 3–189 folds into the Prephenate dehydratase domain; it reads RIAYLGPEGT…ARTRFLLIGV (187 aa). The region spanning 203–280 is the ACT domain; sequence SVVLRIANVP…ADVRYLGSWP (78 aa).

Homodimer.

The enzyme catalyses prephenate + H(+) = 3-phenylpyruvate + CO2 + H2O. Its pathway is amino-acid biosynthesis; L-phenylalanine biosynthesis; phenylpyruvate from prephenate: step 1/1. The sequence is that of Prephenate dehydratase (pheA) from Mycobacterium marinum (strain ATCC BAA-535 / M).